A 352-amino-acid polypeptide reads, in one-letter code: Photosystem II D2 protein (352 aa).

The chain crosses the membrane as a helical span at residues 40-60 (CAYLALGGWLTGTTFVTSWYT). Residue His-117 participates in chlorophyll a binding. The helical transmembrane segment at 124–140 (GFMLRQFEIARLVGVRP) threads the bilayer. Pheophytin a contacts are provided by Gln-129 and Asn-142. The chain crosses the membrane as a helical span at residues 152–165 (VFVSVFLIYPLGQS). His-197 is a binding site for chlorophyll a. A helical transmembrane segment spans residues 207–227 (GALLCAIHGATVENTLYKDGE). His-214 and Phe-261 together coordinate a plastoquinone. His-214 is a Fe cation binding site. His-268 provides a ligand contact to Fe cation. Residues 278–294 (GLWMSSIGVVGLALNLR) traverse the membrane as a helical segment.

It belongs to the reaction center PufL/M/PsbA/D family. As to quaternary structure, PSII is composed of 1 copy each of membrane proteins PsbA, PsbB, PsbC, PsbD, PsbE, PsbF, PsbH, PsbI, PsbJ, PsbK, PsbL, PsbM, PsbT, PsbX, PsbY, PsbZ, Psb30/Ycf12, peripheral proteins PsbO, CyanoQ (PsbQ), PsbU, PsbV and a large number of cofactors. It forms dimeric complexes. The cofactor is The D1/D2 heterodimer binds P680, chlorophylls that are the primary electron donor of PSII, and subsequent electron acceptors. It shares a non-heme iron and each subunit binds pheophytin, quinone, additional chlorophylls, carotenoids and lipids. There is also a Cl(-1) ion associated with D1 and D2, which is required for oxygen evolution. The PSII complex binds additional chlorophylls, carotenoids and specific lipids..

The protein resides in the cellular thylakoid membrane. The enzyme catalyses 2 a plastoquinone + 4 hnu + 2 H2O = 2 a plastoquinol + O2. Functionally, photosystem II (PSII) is a light-driven water:plastoquinone oxidoreductase that uses light energy to abstract electrons from H(2)O, generating O(2) and a proton gradient subsequently used for ATP formation. It consists of a core antenna complex that captures photons, and an electron transfer chain that converts photonic excitation into a charge separation. The D1/D2 (PsbA/PsbD) reaction center heterodimer binds P680, the primary electron donor of PSII as well as several subsequent electron acceptors. D2 is needed for assembly of a stable PSII complex. The polypeptide is Photosystem II D2 protein (Synechococcus sp. (strain JA-3-3Ab) (Cyanobacteria bacterium Yellowstone A-Prime)).